A 220-amino-acid chain; its full sequence is NADH-quinone oxidoreductase subunit B (220 aa).

4 residues coordinate [4Fe-4S] cluster: Cys-37, Cys-38, Cys-103, and Cys-132. The tract at residues 174-220 is disordered; it reads PSSERYAPKNRSQRKLAERQQAAQRREMGAEKPLGALEERAELNAGR. Over residues 210–220 the composition is skewed to basic and acidic residues; it reads LEERAELNAGR.

It belongs to the complex I 20 kDa subunit family. In terms of assembly, NDH-1 is composed of 14 different subunits. Subunits NuoB, C, D, E, F, and G constitute the peripheral sector of the complex. Requires [4Fe-4S] cluster as cofactor.

Its subcellular location is the cell membrane. It carries out the reaction a quinone + NADH + 5 H(+)(in) = a quinol + NAD(+) + 4 H(+)(out). NDH-1 shuttles electrons from NADH, via FMN and iron-sulfur (Fe-S) centers, to quinones in the respiratory chain. The immediate electron acceptor for the enzyme in this species is believed to be a menaquinone. Couples the redox reaction to proton translocation (for every two electrons transferred, four hydrogen ions are translocated across the cytoplasmic membrane), and thus conserves the redox energy in a proton gradient. This chain is NADH-quinone oxidoreductase subunit B, found in Saccharopolyspora erythraea (strain ATCC 11635 / DSM 40517 / JCM 4748 / NBRC 13426 / NCIMB 8594 / NRRL 2338).